Reading from the N-terminus, the 176-residue chain is Large ribosomal subunit protein uL16 (176 aa).

It belongs to the universal ribosomal protein uL16 family.

The chain is Large ribosomal subunit protein uL16 from Thermoplasma acidophilum (strain ATCC 25905 / DSM 1728 / JCM 9062 / NBRC 15155 / AMRC-C165).